The chain runs to 310 residues: Aspartate carbamoyltransferase catalytic subunit 3 (310 aa).

Carbamoyl phosphate is bound by residues Arg55 and Thr56. Lys85 lines the L-aspartate pocket. Carbamoyl phosphate is bound by residues Arg106, His134, and Gln137. L-aspartate is bound by residues Arg167 and Arg228. Leu266 and Pro267 together coordinate carbamoyl phosphate.

It belongs to the aspartate/ornithine carbamoyltransferase superfamily. ATCase family. As to quaternary structure, heterododecamer (2C3:3R2) of six catalytic PyrB chains organized as two trimers (C3), and six regulatory PyrI chains organized as three dimers (R2).

The enzyme catalyses carbamoyl phosphate + L-aspartate = N-carbamoyl-L-aspartate + phosphate + H(+). It functions in the pathway pyrimidine metabolism; UMP biosynthesis via de novo pathway; (S)-dihydroorotate from bicarbonate: step 2/3. Its function is as follows. Catalyzes the condensation of carbamoyl phosphate and aspartate to form carbamoyl aspartate and inorganic phosphate, the committed step in the de novo pyrimidine nucleotide biosynthesis pathway. This is Aspartate carbamoyltransferase catalytic subunit 3 from Shewanella halifaxensis (strain HAW-EB4).